Here is a 469-residue protein sequence, read N- to C-terminus: Glutamate--tRNA ligase (469 aa).

The short motif at 9-19 (PSPTGFLHVGG) is the 'HIGH' region element. The 'KMSKS' region motif lies at 236–240 (KLSKR). Lys239 contributes to the ATP binding site.

This sequence belongs to the class-I aminoacyl-tRNA synthetase family. Glutamate--tRNA ligase type 1 subfamily. As to quaternary structure, monomer.

Its subcellular location is the cytoplasm. The catalysed reaction is tRNA(Glu) + L-glutamate + ATP = L-glutamyl-tRNA(Glu) + AMP + diphosphate. Its function is as follows. Catalyzes the attachment of glutamate to tRNA(Glu) in a two-step reaction: glutamate is first activated by ATP to form Glu-AMP and then transferred to the acceptor end of tRNA(Glu). This is Glutamate--tRNA ligase from Pseudoalteromonas atlantica (strain T6c / ATCC BAA-1087).